Reading from the N-terminus, the 1031-residue chain is Beta-galactosidase (1031 aa).

Substrate is bound by residues N98 and D197. Na(+) is bound at residue D197. Mg(2+)-binding residues include E412, H414, and E457. Residues E457 and 533–536 (EYAH) each bind substrate. The active-site Proton donor is E457. Catalysis depends on E533, which acts as the Nucleophile. N593 serves as a coordination point for Mg(2+). Na(+) contacts are provided by F597 and D600. 2 residues coordinate substrate: D600 and W1005.

It belongs to the glycosyl hydrolase 2 family. As to quaternary structure, homotetramer. Mg(2+) serves as cofactor. Requires Na(+) as cofactor.

The enzyme catalyses Hydrolysis of terminal non-reducing beta-D-galactose residues in beta-D-galactosides.. This is Beta-galactosidase from Oenococcus oeni (strain ATCC BAA-331 / PSU-1).